The primary structure comprises 989 residues: MPEPSISDLSFTSFVTNDDNLFEETFNFYTKLGFHATRSYVKDNRSDFELTGISTDSIKEIWLESFPLSEVVEASGGRELRKPLQESVGYESEALLGYSPYQSGGVVIKLRLSNHDLEKNNDLPGEVTFFTASIDKLKAKLIEIGAEIIPSKIDLVEFSTRDPMGDVISFSSYPSLNSKKITSPDFFLHPKKEVRSEESIVEQVKSEEGKKKIAIITSGGDAPGMNAAVRAVTRAGIFYGCKVYACYEGYTGLVKGGDMLKELQWQDVRGLLSIGGTIIGTARCKEFRERWGRLQACYNMVSNGIDALVVCGGDGSLTGADLFRKEWPELIKELLGEDKITKEQYETHRNLTIVGLVGSIDNDMCGTDSTIGAYSSLERIIELVDYIDATAASHSRAFVVEVMGRHCGWLGLMSGIATGADYIFIPERPPSESNWKDDLKKVCLRHREKGRRKTTVIVAEGAIDDQLNPITSEEVKDVLVEIGLDTRITRLGHVQRGGAPCAFDRFLATVQGVDAVRAVLESTPAIPSPVISILENKIVRQPLVESVAQTKTVSAAIEAKDFDKALQLRDQEFATSYENFLSVSKYDDGSYLVPESSRLNIAIIHVGAPTSALNPATRVATLNSLAKGHRVFAIRNGFAGLIRHGAVRELNWIDVEDWHNTGGSEIGTNRSLPSDDMGTVAYYFQQYKFDGLIIIGGFEAFTALYELDAARAQYPIFNIPMCCLPATVSNNVPGTEYSLGSDTCLNTLSGYCDAVKQSASASRRRTFVVEVQGGYSGYLASYAGLITGALAVYTPENPINLQTVQEDIELLTRTYEEDDGKNRSGKIFIHNEKASKVYTTDLIAAIIGEAGKGRFESRTAVPGHVQQGKSPSSIDRVNACRLAIKCCNFIEDANFQVKHNANLSADERHLRFFYDDGVKTSAVSGKSSVIDDNTSVVIGIQGSEVTFTPVKQLWENETHHKWRKGKNVHWEQLNIVSDLLSGRLSIRTT.

The segment at 1–585 (MPEPSISDLS…SYENFLSVSK (585 aa)) is N-terminal catalytic PFK domain 1. ATP-binding positions include G220, 283–284 (RC), and 313–316 (GDGS). Residue D314 participates in Mg(2+) binding. Residues 359–361 (SID), R396, 403–405 (MGR), E460, R487, and 493–496 (HVQR) contribute to the beta-D-fructose 6-phosphate site. D361 (proton acceptor) is an active-site residue. The interdomain linker stretch occupies residues 586-599 (YDDGSYLVPESSRL). Residues 600 to 989 (NIAIIHVGAP…LSGRLSIRTT (390 aa)) are C-terminal regulatory PFK domain 2. Residues R670, 727-731 (TVSNN), R765, 772-774 (QGG), E832, R858, 864-867 (HVQQ), and R963 each bind beta-D-fructose 2,6-bisphosphate.

It belongs to the phosphofructokinase type A (PFKA) family. ATP-dependent PFK group I subfamily. Eukaryotic two domain clade 'E' sub-subfamily. As to quaternary structure, heterododecamer of 4 alpha, 4 beta and 4 gamma chains. Mg(2+) is required as a cofactor.

The protein localises to the cytoplasm. It carries out the reaction beta-D-fructose 6-phosphate + ATP = beta-D-fructose 1,6-bisphosphate + ADP + H(+). It participates in carbohydrate degradation; glycolysis; D-glyceraldehyde 3-phosphate and glycerone phosphate from D-glucose: step 3/4. With respect to regulation, allosterically activated by ADP, AMP, or fructose 2,6-bisphosphate, and allosterically inhibited by ATP or citrate. Catalyzes the phosphorylation of D-fructose 6-phosphate to fructose 1,6-bisphosphate by ATP, the first committing step of glycolysis. This is ATP-dependent 6-phosphofructokinase subunit alpha (PFK1) from Komagataella pastoris (Yeast).